The chain runs to 231 residues: NADH-ubiquinone oxidoreductase chain 4 (231 aa).

6 helical membrane passes run 1–21 (PIAGSMVLAAILLKLGGYGII), 34–54 (MFLPFVVLALWGAILANLTCL), 63–85 (IAYSSISHMGLVVAAIIIQTPWG), 89–111 (AMALMIAHGFTSSALFCLANTTY), 128–148 (ILPMATTWWLLTNLMNIAVPP), and 156–176 (LLIMSALFNWCPTTIIMLGLS).

Belongs to the complex I subunit 4 family.

It is found in the mitochondrion membrane. It carries out the reaction a ubiquinone + NADH + 5 H(+)(in) = a ubiquinol + NAD(+) + 4 H(+)(out). Functionally, core subunit of the mitochondrial membrane respiratory chain NADH dehydrogenase (Complex I) that is believed to belong to the minimal assembly required for catalysis. Complex I functions in the transfer of electrons from NADH to the respiratory chain. The immediate electron acceptor for the enzyme is believed to be ubiquinone. The sequence is that of NADH-ubiquinone oxidoreductase chain 4 (MT-ND4) from Agkistrodon contortrix contortrix (Southern copperhead).